Here is a 199-residue protein sequence, read N- to C-terminus: Cytochrome c oxidase assembly protein CtaG (199 aa).

Topologically, residues 1-12 are cytoplasmic; that stretch reads MTNTPQTPPKER. A helical; Signal-anchor for type II membrane protein membrane pass occupies residues 13–35; the sequence is ANGVIVGACLAFVAGMVGMAYAA. Over 36–199 the chain is Periplasmic; sequence VPLYDMFCRV…VKDGETENRL (164 aa).

Belongs to the COX11/CtaG family.

It localises to the cell inner membrane. Functionally, exerts its effect at some terminal stage of cytochrome c oxidase synthesis, probably by being involved in the insertion of the copper B into subunit I. The polypeptide is Cytochrome c oxidase assembly protein CtaG (Sinorhizobium fredii (strain NBRC 101917 / NGR234)).